The following is a 743-amino-acid chain: Phosphoribosylformylglycinamidine synthase subunit PurL (743 aa).

The active site involves His-50. Positions 53 and 92 each coordinate ATP. Position 94 (Glu-94) interacts with Mg(2+). Substrate-binding positions include 95-98 and Arg-117; that span reads SHNH. Residue His-96 is the Proton acceptor of the active site. Asp-118 contacts Mg(2+). Gln-241 is a substrate binding site. Position 269 (Asp-269) interacts with Mg(2+). 313 to 315 serves as a coordination point for substrate; the sequence is ESQ. ATP contacts are provided by Asp-495 and Gly-532. Asn-533 contributes to the Mg(2+) binding site. Position 535 (Ser-535) interacts with substrate.

It belongs to the FGAMS family. Monomer. Part of the FGAM synthase complex composed of 1 PurL, 1 PurQ and 2 PurS subunits.

It localises to the cytoplasm. The enzyme catalyses N(2)-formyl-N(1)-(5-phospho-beta-D-ribosyl)glycinamide + L-glutamine + ATP + H2O = 2-formamido-N(1)-(5-O-phospho-beta-D-ribosyl)acetamidine + L-glutamate + ADP + phosphate + H(+). It participates in purine metabolism; IMP biosynthesis via de novo pathway; 5-amino-1-(5-phospho-D-ribosyl)imidazole from N(2)-formyl-N(1)-(5-phospho-D-ribosyl)glycinamide: step 1/2. Its function is as follows. Part of the phosphoribosylformylglycinamidine synthase complex involved in the purines biosynthetic pathway. Catalyzes the ATP-dependent conversion of formylglycinamide ribonucleotide (FGAR) and glutamine to yield formylglycinamidine ribonucleotide (FGAM) and glutamate. The FGAM synthase complex is composed of three subunits. PurQ produces an ammonia molecule by converting glutamine to glutamate. PurL transfers the ammonia molecule to FGAR to form FGAM in an ATP-dependent manner. PurS interacts with PurQ and PurL and is thought to assist in the transfer of the ammonia molecule from PurQ to PurL. This chain is Phosphoribosylformylglycinamidine synthase subunit PurL, found in Rhizobium leguminosarum bv. trifolii (strain WSM2304).